Here is a 249-residue protein sequence, read N- to C-terminus: Probable septum site-determining protein MinC (249 aa).

The tract at residues 116-149 is disordered; that stretch reads AAVSPPPPPPPPPARAEPAAPVARPAPGRMQRNA. Residues 119–130 are compositionally biased toward pro residues; sequence SPPPPPPPPPAR. A compositionally biased stretch (low complexity) spans 131–142; it reads AEPAAPVARPAP.

This sequence belongs to the MinC family. As to quaternary structure, interacts with MinD and FtsZ.

Cell division inhibitor that blocks the formation of polar Z ring septums. Rapidly oscillates between the poles of the cell to destabilize FtsZ filaments that have formed before they mature into polar Z rings. Prevents FtsZ polymerization. The sequence is that of Probable septum site-determining protein MinC from Xanthomonas campestris pv. campestris (strain B100).